The sequence spans 528 residues: T-complex protein 1 subunit delta (528 aa).

It belongs to the TCP-1 chaperonin family. Heterooligomeric complex of about 850 to 900 kDa that forms two stacked rings, 12 to 16 nm in diameter.

The protein resides in the cytoplasm. In terms of biological role, molecular chaperone; assists the folding of proteins upon ATP hydrolysis. Known to play a role, in vitro, in the folding of actin and tubulin. In yeast may play a role in mitotic spindle formation. This is T-complex protein 1 subunit delta (CCT4) from Saccharomyces cerevisiae (strain ATCC 204508 / S288c) (Baker's yeast).